The following is a 209-amino-acid chain: MEKLYNENEGMASNQGKMENEEQPQDERKPEVACTLEDKKLENEGKTENKGKTGDEEMLKDKGKPESEGKAKEGKSEREGESEMEGGSEREGKPESEGEPGSETRAAGKRPAEDDVPRKAKRKTNKGLAHYLKEYKEAIHDMNFSNEDMIREFDNMAKVQDEKRKSKQKLGAFLWMQRNLQDPFYPRGPREFRGGCRAPRRDIEDIPYV.

An N-acetylmethionine modification is found at M1. Residues 1–125 form a disordered region; that stretch reads MEKLYNENEG…VPRKAKRKTN (125 aa). Positions 25-96 are enriched in basic and acidic residues; the sequence is QDERKPEVAC…GSEREGKPES (72 aa). A phosphoserine mark is found at S88 and S96.

Belongs to the TFS-II family. TFA subfamily.

It localises to the nucleus. In terms of biological role, may be involved in transcriptional regulation. In Pongo abelii (Sumatran orangutan), this protein is Transcription elongation factor A protein-like 4 (TCEAL4).